The chain runs to 135 residues: M-zodatoxin-Lt8q (135 aa).

The N-terminal stretch at 1-20 is a signal peptide; sequence MKYFVVALALVAAFACIAES. A propeptide spanning residues 21–60 is cleaved from the precursor; that stretch reads KPAESEHELAEVEEENELADLEDAVWLEHLADLSDLEEAR.

Belongs to the cationic peptide 06 (cytoinsectotoxin) family. As to expression, expressed by the venom gland.

Its subcellular location is the secreted. Insecticidal, cytolytic and antimicrobial peptide. Forms voltage-dependent, ion-permeable channels in membranes. At high concentration causes cell membrane lysis. This is M-zodatoxin-Lt8q (cit 1-16) from Lachesana tarabaevi (Spider).